The primary structure comprises 232 residues: MVKIVKRIKKIREGINFNELYTLTDAVSMVKERAVAKFDETIEISMNLGVDPRHADQMVRGVAHLPNGTGKNIRVAVFARGDKAEEAKAAGADIVGAEDLFETVNGGTINFDRCIATPDMMPLVGRLGKVLGPRSLMPNPKVGTVTTDIAGAVKASKGGAVEFRVEKAGIVHAGVGKASFGAEQLIENIKTFVSAVIKAKPQGAKSEYIKRVAVSSTMGIGIKVDLVTIRSE.

This sequence belongs to the universal ribosomal protein uL1 family. Part of the 50S ribosomal subunit.

In terms of biological role, binds directly to 23S rRNA. The L1 stalk is quite mobile in the ribosome, and is involved in E site tRNA release. Protein L1 is also a translational repressor protein, it controls the translation of the L11 operon by binding to its mRNA. In Bartonella bacilliformis (strain ATCC 35685 / KC583 / Herrer 020/F12,63), this protein is Large ribosomal subunit protein uL1.